We begin with the raw amino-acid sequence, 225 residues long: NAD(P)H-quinone oxidoreductase subunit K, chloroplastic (225 aa).

The [4Fe-4S] cluster site is built by C43, C44, C108, and C139.

It belongs to the complex I 20 kDa subunit family. NDH is composed of at least 16 different subunits, 5 of which are encoded in the nucleus. The cofactor is [4Fe-4S] cluster.

The protein localises to the plastid. It is found in the chloroplast thylakoid membrane. It carries out the reaction a plastoquinone + NADH + (n+1) H(+)(in) = a plastoquinol + NAD(+) + n H(+)(out). The enzyme catalyses a plastoquinone + NADPH + (n+1) H(+)(in) = a plastoquinol + NADP(+) + n H(+)(out). Functionally, NDH shuttles electrons from NAD(P)H:plastoquinone, via FMN and iron-sulfur (Fe-S) centers, to quinones in the photosynthetic chain and possibly in a chloroplast respiratory chain. The immediate electron acceptor for the enzyme in this species is believed to be plastoquinone. Couples the redox reaction to proton translocation, and thus conserves the redox energy in a proton gradient. The polypeptide is NAD(P)H-quinone oxidoreductase subunit K, chloroplastic (Nuphar advena (Common spatterdock)).